A 124-amino-acid polypeptide reads, in one-letter code: Small ribosomal subunit protein uS12 (124 aa).

Positions 1 to 28 (MPTIQQLIRSERSKAKKKTKSPALKQCP) are disordered. Aspartate 89 is modified (3-methylthioaspartic acid). The interval 101 to 124 (TLDAQGVKDRKQGRSKYGTKKPKE) is disordered. Residues 113-124 (GRSKYGTKKPKE) show a composition bias toward basic residues.

Belongs to the universal ribosomal protein uS12 family. As to quaternary structure, part of the 30S ribosomal subunit. Contacts proteins S8 and S17. May interact with IF1 in the 30S initiation complex.

In terms of biological role, with S4 and S5 plays an important role in translational accuracy. Functionally, interacts with and stabilizes bases of the 16S rRNA that are involved in tRNA selection in the A site and with the mRNA backbone. Located at the interface of the 30S and 50S subunits, it traverses the body of the 30S subunit contacting proteins on the other side and probably holding the rRNA structure together. The combined cluster of proteins S8, S12 and S17 appears to hold together the shoulder and platform of the 30S subunit. The polypeptide is Small ribosomal subunit protein uS12 (Crocosphaera subtropica (strain ATCC 51142 / BH68) (Cyanothece sp. (strain ATCC 51142))).